The chain runs to 338 residues: MFQAFPGDYDSGSRCSSSPSAESQYLSSVDSFGSPPTAAASQECAGLGEMPGSFVPTVTAITTSQDLQWLVQPTLISSMAQSQGQPLASQPPAVDPYDMPGTSYSTPGLSAYSTGGASGSGGPSTSTSTSGPVSARPARARPRRPREETLTPEEEEKRRVRRERNKLAAAKCRNRRRELTDRLQAETDQLEEEKAELESEIAELQKEKERLEFVLVAHKPGCKIPYEEGPGPGPLAEVRDLPGSTSAKEDGFGWLLPPPPPPPLPFQSSRDAPPNLTASLFTHSEVQVLGDPFPVVSPSYTSSFVLTCPEVSAFAGSQRTSGSEQPSDPLNSPSLLAL.

Disordered stretches follow at residues 1-54 (MFQA…PGSF) and 80-179 (AQSQ…RREL). Positions 13–31 (SRCSSSPSAESQYLSSVDS) are enriched in polar residues. Phosphoserine is present on Ser-27. The segment covering 123-137 (PSTSTSTSGPVSARP) has biased composition (low complexity). Residues 155-218 (EEKRRVRRER…ERLEFVLVAH (64 aa)) form the bZIP domain. The interval 157–182 (KRRVRRERNKLAAAKCRNRRRELTDR) is basic motif. Residues 183–211 (LQAETDQLEEEKAELESEIAELQKEKERL) form a leucine-zipper region. 2 disordered regions span residues 222-276 (CKIP…PPNL) and 315-338 (AGSQ…LLAL). Positions 256–265 (LPPPPPPPLP) are enriched in pro residues. Polar residues predominate over residues 266 to 276 (FQSSRDAPPNL).

The protein belongs to the bZIP family. Fos subfamily. In terms of assembly, heterodimer; binds to DNA as heterodimer. Component of an AP-1 transcription factor complex; composed of FOS-JUN heterodimers. As part of the AP-1 transcription factor complex, forms heterodimers with JUN, JUNB or JUND, thereby binding to the AP-1 consensus sequence and stimulating transcription. Phosphorylated; phosphorylation is induced by chronic electroconvulsive seizure (ECS) treatment. In terms of tissue distribution, expressed in brain. Expressed in pyramidal cells in CA1 and CA3, in the dentate gyrus and the nucleus accumbens (at protein level).

The protein resides in the nucleus. In terms of biological role, heterodimerizes with proteins of the JUN family to form an AP-1 transcription factor complex, thereby enhancing their DNA binding activity to an AP-1 consensus sequence 5'-TGA[GC]TCA-3' and enhancing their transcriptional activity. Exhibits transactivation activity in vitro. As part of the AP-1 complex, facilitates enhancer selection together with cell-type-specific transcription factors by collaboratively binding to nucleosomal enhancers and recruiting the SWI/SNF (BAF) chromatin remodeling complex to establish accessible chromatin. Together with JUN, plays a role in activation-induced cell death of T cells by binding to the AP-1 promoter site of FASLG/CD95L, and inducing its transcription in response to activation of the TCR/CD3 signaling pathway. Involved in the display of nurturing behavior towards newborns. May play a role in neurogenesis in the hippocampus and in learning and memory-related tasks by regulating the expression of various genes involved in neurogenesis, depression and epilepsy. Implicated in behavioral responses related to morphine reward and spatial memory. This chain is Protein FosB, found in Rattus norvegicus (Rat).